A 209-amino-acid polypeptide reads, in one-letter code: dTTP/UTP pyrophosphatase (209 aa).

D88 acts as the Proton acceptor in catalysis.

Belongs to the Maf family. YhdE subfamily. Requires a divalent metal cation as cofactor.

Its subcellular location is the cytoplasm. It carries out the reaction dTTP + H2O = dTMP + diphosphate + H(+). It catalyses the reaction UTP + H2O = UMP + diphosphate + H(+). Functionally, nucleoside triphosphate pyrophosphatase that hydrolyzes dTTP and UTP. May have a dual role in cell division arrest and in preventing the incorporation of modified nucleotides into cellular nucleic acids. In Burkholderia mallei (strain ATCC 23344), this protein is dTTP/UTP pyrophosphatase.